Consider the following 121-residue polypeptide: MIQQESYLSVADNSGAKRIQCIRVLGTNRRYAHVGDVIVAAVKDAMPNMGVKKSDVVKAVVVRTKATLRRDTGNSIRFDDNAAVIINADNNPKGTRVFGPVARELRERNFTKIVSLAPEVI.

The protein belongs to the universal ribosomal protein uL14 family. Part of the 50S ribosomal subunit. Forms a cluster with proteins L3 and L19. In the 70S ribosome, L14 and L19 interact and together make contacts with the 16S rRNA in bridges B5 and B8.

Binds to 23S rRNA. Forms part of two intersubunit bridges in the 70S ribosome. The sequence is that of Large ribosomal subunit protein uL14 from Parasynechococcus marenigrum (strain WH8102).